Reading from the N-terminus, the 326-residue chain is 4-hydroxythreonine-4-phosphate dehydrogenase (326 aa).

2 residues coordinate substrate: His-133 and Thr-134. The a divalent metal cation site is built by His-163, His-208, and His-263. Residues Lys-271, Asn-280, and Arg-289 each coordinate substrate.

The protein belongs to the PdxA family. As to quaternary structure, homodimer. Zn(2+) serves as cofactor. The cofactor is Mg(2+). Co(2+) is required as a cofactor.

It is found in the cytoplasm. It catalyses the reaction 4-(phosphooxy)-L-threonine + NAD(+) = 3-amino-2-oxopropyl phosphate + CO2 + NADH. Its pathway is cofactor biosynthesis; pyridoxine 5'-phosphate biosynthesis; pyridoxine 5'-phosphate from D-erythrose 4-phosphate: step 4/5. Catalyzes the NAD(P)-dependent oxidation of 4-(phosphooxy)-L-threonine (HTP) into 2-amino-3-oxo-4-(phosphooxy)butyric acid which spontaneously decarboxylates to form 3-amino-2-oxopropyl phosphate (AHAP). The sequence is that of 4-hydroxythreonine-4-phosphate dehydrogenase from Pseudoalteromonas atlantica (strain T6c / ATCC BAA-1087).